A 30-amino-acid chain; its full sequence is Dermaseptin-DI4 (30 aa).

As to expression, expressed by the skin glands.

The protein resides in the secreted. Functionally, antibacterial activity against Gram-positive bacteria S.aureus and E.faecalis, and Gram-negative bacteria P.aeruginosa and E.coli. The protein is Dermaseptin-DI4 of Phyllomedusa distincta (Monkey frog).